A 316-amino-acid polypeptide reads, in one-letter code: MERDCDIVDLDQPSLGTVISIKDGSTPTDISTTSSTTEDKLCSGCGCLIKDRYIYRVMEDSYHESCLRCSCCQLSLSSFKKCFSRHGNIYCEHDHQMLYGKRCRRCMTLLLPTDIVHRVHFMYYHAQCFSCCSCQRPFNLGDEYHVFDGEVFCRNDYQSICNFQTISNPDPLMEEVVRSEIHRKTPKRPRTILNAQQRRQFKTAFERSSKPSRKVREQLANETGLSVRVVQVWFQNQRAKIKKLNKKDSDSGDTFKHGPGSEGRSTEDIRSSDDEEESVINLDADEVETSETSSYTDPIQKLYNMTSSQIYFPYHS.

2 consecutive LIM zinc-binding domains span residues 40 to 101 (KLCS…LYGK) and 102 to 163 (RCRR…ICNF). The homeobox DNA-binding region spans 186 to 245 (PKRPRTILNAQQRRQFKTAFERSSKPSRKVREQLANETGLSVRVVQVWFQNQRAKIKKLN). The interval 244–297 (LNKKDSDSGDTFKHGPGSEGRSTEDIRSSDDEEESVINLDADEVETSETSSYTD) is disordered. Residues 246–256 (KKDSDSGDTFK) are compositionally biased toward basic and acidic residues. Residues 273 to 289 (DDEEESVINLDADEVET) are compositionally biased toward acidic residues.

The protein localises to the nucleus. Its function is as follows. Transcription factor. Required for the terminal differentiation of sensory- and motor-neurons, especially GABAergic neurons, and for morphological aspects of uterine development. Plays a role in the cell-type-specific regulation of glutamic acid decarboxylase unc-25. Involved in promoting sleep-like behavioral quiescence, acting by modulating expression of transcription factor aptf-1 in the single sleep-active ring interneuron RIS. Plays a role in regulation of RIS differentiation. Required for the functional asymmetry of the ASER and ASEL chemosensory neuron pair, conferring the ability to discriminate sodium from chloride, perhaps by modulating expression of receptor-type guanylate cyclases, such as gcy-5. Involved in regulating postembryonic axon maintenance in the ventral nerve cord, acting in concert with LIM homeobox protein ceh-14, via modulation of expression of immunoglobulin domain zig genes in the interneuron PVT. May play a role in the functions of the excretory gland cell. This chain is LIM/homeobox protein lim-6, found in Caenorhabditis elegans.